Reading from the N-terminus, the 319-residue chain is D-alanine--D-alanine ligase (319 aa).

One can recognise an ATP-grasp domain in the interval 120-315 (KRVLAQAGVP…YPELLRRLVE (196 aa)). Residue 147–198 (DPPFFVKPANTGSSVGISRVERFQDLEAALALAFRYDEKAVVEKALSPVREL) participates in ATP binding. Positions 270, 282, and 284 each coordinate Mg(2+).

The protein belongs to the D-alanine--D-alanine ligase family. It depends on Mg(2+) as a cofactor. Requires Mn(2+) as cofactor.

The protein localises to the cytoplasm. It carries out the reaction 2 D-alanine + ATP = D-alanyl-D-alanine + ADP + phosphate + H(+). It participates in cell wall biogenesis; peptidoglycan biosynthesis. Functionally, cell wall formation. The sequence is that of D-alanine--D-alanine ligase from Thermus thermophilus (strain ATCC BAA-163 / DSM 7039 / HB27).